Consider the following 406-residue polypeptide: Tyrosine--tRNA ligase (406 aa).

Residues 48–57 (PSRPDLHLGH) carry the 'HIGH' region motif. Residues 232 to 236 (KMSKS) carry the 'KMSKS' region motif. Lys-235 contacts ATP. The region spanning 339–401 (MPVVELLMAL…GKRKFFKVAR (63 aa)) is the S4 RNA-binding domain.

Belongs to the class-I aminoacyl-tRNA synthetase family. TyrS type 2 subfamily. Homodimer.

It localises to the cytoplasm. The enzyme catalyses tRNA(Tyr) + L-tyrosine + ATP = L-tyrosyl-tRNA(Tyr) + AMP + diphosphate + H(+). In terms of biological role, catalyzes the attachment of tyrosine to tRNA(Tyr) in a two-step reaction: tyrosine is first activated by ATP to form Tyr-AMP and then transferred to the acceptor end of tRNA(Tyr). In Chlorobaculum tepidum (strain ATCC 49652 / DSM 12025 / NBRC 103806 / TLS) (Chlorobium tepidum), this protein is Tyrosine--tRNA ligase.